Here is a 121-residue protein sequence, read N- to C-terminus: Large ribosomal subunit protein bL19 (121 aa).

It belongs to the bacterial ribosomal protein bL19 family.

Its function is as follows. This protein is located at the 30S-50S ribosomal subunit interface and may play a role in the structure and function of the aminoacyl-tRNA binding site. This is Large ribosomal subunit protein bL19 from Chlorobium phaeobacteroides (strain BS1).